Here is a 147-residue protein sequence, read N- to C-terminus: Ponticulin-like protein C1 (147 aa).

An N-terminal signal peptide occupies residues 1–20; sequence MKFTKSLLLLIVAVFASSNA. Asparagine 118 is lipidated: GPI-like-anchor amidated asparagine. A glycan (N-linked (GlcNAc...) asparagine) is linked at asparagine 118. A propeptide spans 119 to 147 (removed in mature form); that stretch reads SSESDSSDSTRIGASFALAASVLLSMLAI.

Belongs to the ponticulin family. Post-translationally, the GPI-like-anchor contains a phosphoceramide group, rather than a phosphatidyl group.

The protein resides in the cell membrane. This chain is Ponticulin-like protein C1 (ponC1), found in Dictyostelium discoideum (Social amoeba).